The chain runs to 71 residues: Serine palmitoyltransferase small subunit A (71 aa).

Residues 1–12 lie on the Cytoplasmic side of the membrane; that stretch reads MAGMALARAWKQ. Residues 13–29 form a helical membrane-spanning segment; the sequence is MSWFYYQYLLVTALYML. Over 30 to 34 the chain is Lumenal; the sequence is EPWER. A helical membrane pass occupies residues 35-57; it reads TVFNSMLVSIVGMALYTGYVFMP. Over 58–71 the chain is Cytoplasmic; that stretch reads QHIMAILHYFEIVQ.

It belongs to the SPTSS family. SPTSSA subfamily. In terms of assembly, component of the serine palmitoyltransferase (SPT) complex, which is composed of SPTLC1, SPTLC2 or SPTLC3 and SPTSSA or SPTSSB. The heterodimer consisting of SPTLC1 and SPTLC2/SPTLC3 forms the catalytic core of the enzyme, while SPTSSA or SPTSSB subunits determine substrate specificity. SPT also interacts with ORMDL proteins, especially ORMDL3, which negatively regulate SPT activity in the presence of ceramides. Interacts with MBOAT7; the interaction plays a role in MBOAT7 localization to mitochondria-associated membranes.

It localises to the endoplasmic reticulum membrane. It participates in lipid metabolism; sphingolipid metabolism. Its function is as follows. Component of the serine palmitoyltransferase multisubunit enzyme (SPT) that catalyzes the initial and rate-limiting step in sphingolipid biosynthesis by condensing L-serine and activated acyl-CoA (most commonly palmitoyl-CoA) to form long-chain bases. The SPT complex is composed of SPTLC1, SPTLC2 or SPTLC3 and SPTSSA or SPTSSB. Within this complex, the heterodimer consisting of SPTLC1 and SPTLC2/SPTLC3 forms the catalytic core. Within the SPT complex, SPTSSA stimulates the catalytic activity and plays a role in substrate specificity, which depends upon the overall complex composition. The SPTLC1-SPTLC2-SPTSSA complex shows a strong preference for C16-CoA substrate, while the SPTLC1-SPTLC3-SPTSSA isozyme uses both C14-CoA and C16-CoA as substrates, with a slight preference for C14-CoA. Independently of its action as a SPT component, may be involved in MBOAT7 localization to mitochondria-associated membranes, a membrane bridge between the endoplasmic reticulum and mitochondria, may hence affect MBOAT7-catalyzed incorporation of arachidonic acid into phosphatidylinositol. This Homo sapiens (Human) protein is Serine palmitoyltransferase small subunit A.